The primary structure comprises 1212 residues: MVDVNRFKSMQITLASPSKVRSWSYGEVKKPETINYRTLKPEREGLFDEVIFGPTKDWECACGKYKRIRYKGIVCDRCGVEVTRAKVRRERMGHIELKAPVSHIWYFKGIPSRMGLTLDMSPRALEEVIYFAAYVVIDPMDTPLEPKSLLTEREYREKVQEYGYGSFIAKMGAEAIQDLLKRVDLPAEIAELKEELKTATGQKRIKAVRRLDVLDAFNKSGNKPEWMVLNILPVIPPDLRPMVQLDGGRFAASDLNDLYRRVINRNNRLARLLELNAPGIIVQNEKRMLQEAVDALIDNGRRGRPITGPGSRPLKSLSHMLKGKQGRFRQNLLGKRVDFSGRSVIAVGPTLKMYQCGVPREMAIELFKPFVMREIVAKEYAGNVKAAKRMVERGDERIWDILEEVIKEHPVLLNRAPTLHRLGIQAFEPVLIDGKALRLHPLVCEAYNADFDGDQMAIHVPLSEEAQAEARLLMLAAEHILNPKDGKPVVTPSQDMVLGNYYLTMEDAGREGEGMIFKDIDEAVMAYQNGYAHLHSRVGIAVDSMPNKPWKDSQRHKIMVTTVGKILFNAIMPEDLPYLQEPNNANLTEGTPDKYFLEAGQDIQEVIDNLPINVPFKKKNLGNIIAETFKRFRTTETSAFLDRLKDLGYYHSTLAGLTVGIADIPVIDNKAEIIEAAHHRVEDINKAFRRGLMTEDDRYIAVTTTWREAKEALEKRLIETQDPKNPIVMMMDSGARGNISNFSQLAGMRGLMAAPNGRIMELPILSNFREGLSVLEMFFSTHGARKGMTDTALKTADSGYLTRRLVDVAQDVIIREDDCGTDRGLVIRAITDGKEVTETLEERLQGRYTRKSVKHPETGEVLIGADQLISEDMARKIVEAGVEEVTIRSVFTCATRHGVCRHCYGINLATGDAVEVGEAVGTIAAQSIGEPGTQLTMRTFHTGGVASNTDITQGLPRIQEIFEARNPKGEAVITEVKGKVVDIEEDASTRTKKVYVEGKTGNGEYVVPFTARMKVEIGDEVNRGAALTEGSIQPKRLLEVRDTLSVETYLLAEVQKVYRSQGVEIGDKHVEVMVRQMLRKVRVMDPGDTDLLPGTLMDISDFTDANKEIVISGGIPATSRPVLMGITKASLETNSFLSAASFQETTRVLTDAAIRGKKDHLLGLKENVIIGKIIPAGTGMARYRNIEPQAINEVEIIEETEQAEETVVTEAE.

Cys-60, Cys-62, Cys-75, and Cys-78 together coordinate Zn(2+). Positions 450, 452, and 454 each coordinate Mg(2+). 4 residues coordinate Zn(2+): Cys-819, Cys-893, Cys-900, and Cys-903.

It belongs to the RNA polymerase beta' chain family. The RNAP catalytic core consists of 2 alpha, 1 beta, 1 beta' and 1 omega subunit. When a sigma factor is associated with the core the holoenzyme is formed, which can initiate transcription. It depends on Mg(2+) as a cofactor. Requires Zn(2+) as cofactor.

The catalysed reaction is RNA(n) + a ribonucleoside 5'-triphosphate = RNA(n+1) + diphosphate. Its function is as follows. DNA-dependent RNA polymerase catalyzes the transcription of DNA into RNA using the four ribonucleoside triphosphates as substrates. In Streptococcus uberis (strain ATCC BAA-854 / 0140J), this protein is DNA-directed RNA polymerase subunit beta'.